The chain runs to 367 residues: Phospho-N-acetylmuramoyl-pentapeptide-transferase (367 aa).

A run of 10 helical transmembrane segments spans residues 27-47, 73-93, 97-117, 132-152, 167-187, 200-220, 237-257, 264-284, 289-309, and 344-364; these read VLAA…VIRW, TMGG…WGDL, YVWT…YDDW, WKFF…AFSA, TMAY…VIVG, GLAI…AYVT, AGEL…FLWF, VFMG…VAVI, IVLL…MLQV, and QVVV…LSTL.

The protein belongs to the glycosyltransferase 4 family. MraY subfamily. Mg(2+) is required as a cofactor.

Its subcellular location is the cell inner membrane. The catalysed reaction is UDP-N-acetyl-alpha-D-muramoyl-L-alanyl-gamma-D-glutamyl-meso-2,6-diaminopimeloyl-D-alanyl-D-alanine + di-trans,octa-cis-undecaprenyl phosphate = di-trans,octa-cis-undecaprenyl diphospho-N-acetyl-alpha-D-muramoyl-L-alanyl-D-glutamyl-meso-2,6-diaminopimeloyl-D-alanyl-D-alanine + UMP. The protein operates within cell wall biogenesis; peptidoglycan biosynthesis. Catalyzes the initial step of the lipid cycle reactions in the biosynthesis of the cell wall peptidoglycan: transfers peptidoglycan precursor phospho-MurNAc-pentapeptide from UDP-MurNAc-pentapeptide onto the lipid carrier undecaprenyl phosphate, yielding undecaprenyl-pyrophosphoryl-MurNAc-pentapeptide, known as lipid I. The sequence is that of Phospho-N-acetylmuramoyl-pentapeptide-transferase from Dechloromonas aromatica (strain RCB).